We begin with the raw amino-acid sequence, 319 residues long: MPSFISIQNIIYPSNELSLTMILLEEWSLTYVEGIDSKKYLQGQLTIDINLLLKTHHTLCAHCNFNGRVWSTMHLFHYEKGYAYIQRKSVSQIQIKEICKYSIFSKIKIRELNSICLIGFAGCNVRSFLSSLFVKIPNQSCPVIHEDNKTILWYEKPSERFLLVLPFLDFLTLKRKINQNIFLNNSKQWLLLDIEAGLPVIDKICSNKFTPQAINLHNLKAISFKKGCYYGQETIARIFFKKTNKYFLCFLVSTGSIFPKIGSFIETKVDSEWFKVGVLLSIVHVKCEEIYIQVVLRKSVNINNLFRIHGFENIFLIKN.

Positions 27 and 189 each coordinate folate.

The protein belongs to the tRNA-modifying YgfZ family.

Its subcellular location is the cytoplasm. Functionally, folate-binding protein involved in regulating the level of ATP-DnaA and in the modification of some tRNAs. It is probably a key factor in regulatory networks that act via tRNA modification, such as initiation of chromosomal replication. The protein is tRNA-modifying protein YgfZ of Buchnera aphidicola subsp. Acyrthosiphon pisum (strain APS) (Acyrthosiphon pisum symbiotic bacterium).